The chain runs to 211 residues: Putative truncated flagellar export/assembly protein LafU (211 aa).

Residues 58–176 (LRVLIKDDQN…RIEIMVLTKS (119 aa)) form the OmpA-like domain.

Belongs to the MotB family.

This is Putative truncated flagellar export/assembly protein LafU from Escherichia coli (strain K12).